The primary structure comprises 256 residues: Protein FixA (256 aa).

The protein belongs to the ETF beta-subunit/FixA family. As to quaternary structure, heterodimer of FixA and FixB.

Its pathway is amine and polyamine metabolism; carnitine metabolism. In terms of biological role, required for anaerobic carnitine reduction. May bring reductant to CaiA. The sequence is that of Protein FixA from Escherichia coli O139:H28 (strain E24377A / ETEC).